The sequence spans 22 residues: Phospholipase A2 (22 aa).

It belongs to the phospholipase A2 family. Ca(2+) serves as cofactor.

The protein localises to the secreted. It catalyses the reaction a 1,2-diacyl-sn-glycero-3-phosphocholine + H2O = a 1-acyl-sn-glycero-3-phosphocholine + a fatty acid + H(+). Functionally, PA2 catalyzes the calcium-dependent hydrolysis of the 2-acyl groups in 3-sn-phosphoglycerides. This chain is Phospholipase A2, found in Struthio camelus (Common ostrich).